The primary structure comprises 160 residues: SsrA-binding protein (160 aa).

It belongs to the SmpB family.

The protein resides in the cytoplasm. Its function is as follows. Required for rescue of stalled ribosomes mediated by trans-translation. Binds to transfer-messenger RNA (tmRNA), required for stable association of tmRNA with ribosomes. tmRNA and SmpB together mimic tRNA shape, replacing the anticodon stem-loop with SmpB. tmRNA is encoded by the ssrA gene; the 2 termini fold to resemble tRNA(Ala) and it encodes a 'tag peptide', a short internal open reading frame. During trans-translation Ala-aminoacylated tmRNA acts like a tRNA, entering the A-site of stalled ribosomes, displacing the stalled mRNA. The ribosome then switches to translate the ORF on the tmRNA; the nascent peptide is terminated with the 'tag peptide' encoded by the tmRNA and targeted for degradation. The ribosome is freed to recommence translation, which seems to be the essential function of trans-translation. The protein is SsrA-binding protein of Mycobacterium leprae (strain Br4923).